The following is a 178-amino-acid chain: uncharacterized protein (178 aa).

This is an uncharacterized protein from Saccharomyces cerevisiae (strain ATCC 204508 / S288c) (Baker's yeast).